The primary structure comprises 75 residues: Translation initiation factor IF-1 1 (75 aa).

An S1-like domain is found at 1-74; that stretch reads MARSDMIEVD…TRGRIVYRYR (74 aa).

Belongs to the IF-1 family. In terms of assembly, component of the 30S ribosomal translation pre-initiation complex which assembles on the 30S ribosome in the order IF-2 and IF-3, IF-1 and N-formylmethionyl-tRNA(fMet); mRNA recruitment can occur at any time during PIC assembly.

The protein localises to the cytoplasm. Its function is as follows. One of the essential components for the initiation of protein synthesis. Stabilizes the binding of IF-2 and IF-3 on the 30S subunit to which N-formylmethionyl-tRNA(fMet) subsequently binds. Helps modulate mRNA selection, yielding the 30S pre-initiation complex (PIC). Upon addition of the 50S ribosomal subunit IF-1, IF-2 and IF-3 are released leaving the mature 70S translation initiation complex. The chain is Translation initiation factor IF-1 1 from Symbiobacterium thermophilum (strain DSM 24528 / JCM 14929 / IAM 14863 / T).